A 395-amino-acid polypeptide reads, in one-letter code: Phosphopentomutase (395 aa).

Mn(2+) contacts are provided by Asp12, Asp289, His294, Asp330, His331, and His342.

It belongs to the phosphopentomutase family. The cofactor is Mn(2+).

It is found in the cytoplasm. It catalyses the reaction 2-deoxy-alpha-D-ribose 1-phosphate = 2-deoxy-D-ribose 5-phosphate. The catalysed reaction is alpha-D-ribose 1-phosphate = D-ribose 5-phosphate. Its pathway is carbohydrate degradation; 2-deoxy-D-ribose 1-phosphate degradation; D-glyceraldehyde 3-phosphate and acetaldehyde from 2-deoxy-alpha-D-ribose 1-phosphate: step 1/2. Isomerase that catalyzes the conversion of deoxy-ribose 1-phosphate (dRib-1-P) and ribose 1-phosphate (Rib-1-P) to deoxy-ribose 5-phosphate (dRib-5-P) and ribose 5-phosphate (Rib-5-P), respectively. This chain is Phosphopentomutase, found in Levilactobacillus brevis (strain ATCC 367 / BCRC 12310 / CIP 105137 / JCM 1170 / LMG 11437 / NCIMB 947 / NCTC 947) (Lactobacillus brevis).